Here is a 144-residue protein sequence, read N- to C-terminus: Large ribosomal subunit protein uL15 (144 aa).

The tract at residues 1-58 (MHLNTLSPAPGSHKARKRCGRGIGSGIGKTGGRGHKGQKSRSGGSVRPGFEGGQMPLK) is disordered. Gly residues predominate over residues 21 to 31 (RGIGSGIGKTG).

It belongs to the universal ribosomal protein uL15 family. In terms of assembly, part of the 50S ribosomal subunit.

Its function is as follows. Binds to the 23S rRNA. This is Large ribosomal subunit protein uL15 from Colwellia psychrerythraea (strain 34H / ATCC BAA-681) (Vibrio psychroerythus).